The following is a 782-amino-acid chain: Polyribonucleotide nucleotidyltransferase (782 aa).

Residues aspartate 514 and aspartate 520 each contribute to the Mg(2+) site. Residues 580–639 enclose the KH domain; it reads PRIITIKIPVDQIGAVIGPKGKIINQIQDDTGAEITIEDDGTIYIGATEGTAAEAARAAI. The S1 motif domain occupies 651–723; the sequence is GERYLGTVVK…ARGKLSLVPV (73 aa). Low complexity predominate over residues 734–753; it reads AGAGESAASGGAPRSAGGPQ. A disordered region spans residues 734–782; that stretch reads AGAGESAASGGAPRSAGGPQPREHQGPGRPRGRGGDHGGEGRQRTRRRH. Positions 766 to 776 are enriched in basic and acidic residues; that stretch reads RGGDHGGEGRQ.

It belongs to the polyribonucleotide nucleotidyltransferase family. It depends on Mg(2+) as a cofactor.

It is found in the cytoplasm. The enzyme catalyses RNA(n+1) + phosphate = RNA(n) + a ribonucleoside 5'-diphosphate. Functionally, involved in mRNA degradation. Catalyzes the phosphorolysis of single-stranded polyribonucleotides processively in the 3'- to 5'-direction. This is Polyribonucleotide nucleotidyltransferase from Acidothermus cellulolyticus (strain ATCC 43068 / DSM 8971 / 11B).